Here is a 129-residue protein sequence, read N- to C-terminus: Small ribosomal subunit protein uS11 (129 aa).

Belongs to the universal ribosomal protein uS11 family. In terms of assembly, part of the 30S ribosomal subunit. Interacts with proteins S7 and S18. Binds to IF-3.

Located on the platform of the 30S subunit, it bridges several disparate RNA helices of the 16S rRNA. Forms part of the Shine-Dalgarno cleft in the 70S ribosome. The sequence is that of Small ribosomal subunit protein uS11 from Pseudomonas putida (strain GB-1).